A 222-amino-acid chain; its full sequence is Deoxyribose-phosphate aldolase (222 aa).

Aspartate 93 serves as the catalytic Proton donor/acceptor. The active-site Schiff-base intermediate with acetaldehyde is the lysine 156. Lysine 186 (proton donor/acceptor) is an active-site residue.

This sequence belongs to the DeoC/FbaB aldolase family. DeoC type 1 subfamily.

The protein resides in the cytoplasm. It carries out the reaction 2-deoxy-D-ribose 5-phosphate = D-glyceraldehyde 3-phosphate + acetaldehyde. It participates in carbohydrate degradation; 2-deoxy-D-ribose 1-phosphate degradation; D-glyceraldehyde 3-phosphate and acetaldehyde from 2-deoxy-alpha-D-ribose 1-phosphate: step 2/2. Catalyzes a reversible aldol reaction between acetaldehyde and D-glyceraldehyde 3-phosphate to generate 2-deoxy-D-ribose 5-phosphate. This chain is Deoxyribose-phosphate aldolase, found in Nocardia farcinica (strain IFM 10152).